The primary structure comprises 110 residues: MATSRFQAFLNSPIGPKTTHFWGPIANWGFVAAGLVDMQKPPEMISGNMSSAMCVYSALFMRFAWMVQPRNYLLLACHASNETVQLYQLSRWARAQGYLSSKKEEEKPSQ.

The next 2 membrane-spanning stretches (helical) occupy residues H20–V36 and M44–M61.

This sequence belongs to the mitochondrial pyruvate carrier (MPC) (TC 2.A.105) family.

It localises to the mitochondrion inner membrane. In terms of biological role, mediates the uptake of pyruvate into mitochondria. The protein is Mitochondrial pyruvate carrier 1 of Arabidopsis thaliana (Mouse-ear cress).